The chain runs to 237 residues: Uridylate kinase (237 aa).

11-14 (KLSG) serves as a coordination point for ATP. Gly53 is a UMP binding site. Residues Gly54 and Arg58 each contribute to the ATP site. Residues Asp73 and 134-141 (TGNPFFTT) each bind UMP. ATP-binding residues include Thr161, Tyr167, and Asp170.

It belongs to the UMP kinase family. As to quaternary structure, homohexamer.

The protein localises to the cytoplasm. The enzyme catalyses UMP + ATP = UDP + ADP. It participates in pyrimidine metabolism; CTP biosynthesis via de novo pathway; UDP from UMP (UMPK route): step 1/1. With respect to regulation, inhibited by UTP. Functionally, catalyzes the reversible phosphorylation of UMP to UDP. This chain is Uridylate kinase, found in Burkholderia vietnamiensis (strain G4 / LMG 22486) (Burkholderia cepacia (strain R1808)).